The primary structure comprises 344 residues: 3,4-dihydroxy-2-butanone 4-phosphate synthase (344 aa).

Positions 1–202 (MILRRVTEAL…VSDLISYRLE (202 aa)) are DHBP synthase. Residues 27 to 28 (RE), D32, 139 to 143 (RTGHT), and E163 each bind D-ribulose 5-phosphate. E28 contributes to the Mg(2+) binding site. H142 provides a ligand contact to Mg(2+). Positions 203 to 344 (NESLLKMFCQ…GLKLVETISL (142 aa)) are GTP cyclohydrolase II-like.

The protein in the N-terminal section; belongs to the DHBP synthase family. This sequence in the C-terminal section; belongs to the GTP cyclohydrolase II family. Mg(2+) serves as cofactor. Mn(2+) is required as a cofactor.

The enzyme catalyses D-ribulose 5-phosphate = (2S)-2-hydroxy-3-oxobutyl phosphate + formate + H(+). The protein operates within cofactor biosynthesis; riboflavin biosynthesis; 2-hydroxy-3-oxobutyl phosphate from D-ribulose 5-phosphate: step 1/1. Functionally, catalyzes the conversion of D-ribulose 5-phosphate to formate and 3,4-dihydroxy-2-butanone 4-phosphate. The polypeptide is 3,4-dihydroxy-2-butanone 4-phosphate synthase (ribB) (Helicobacter pylori (strain J99 / ATCC 700824) (Campylobacter pylori J99)).